The following is a 560-amino-acid chain: Protein NRT1/ PTR FAMILY 2.5 (560 aa).

A disordered region spans residues 1-20 (MADSKSGDTEVAHRSSDPSE). The next 12 membrane-spanning stretches (helical) occupy residues 34 to 54 (TLLGMSITSFGWGMNLIVFLI), 77 to 97 (MLPVVAAILADSFFGNIPVIS), 101 to 121 (FISLAGTSLLTLITSLNYLMP), 141 to 161 (ILYVALALVIIGSAGTRFTLA), 177 to 197 (FFNWFFLALYIGAITGTTAIV), 207 to 227 (LGFGLCAVANLISFIVFIAGV), 323 to 343 (AILRLVPLWAAVMFLSTPVAV), 372 to 392 (VIVLVFGCVFIMLNNWIIYPM), 404 to 424 (LQQVGIGHVFTILSMAISAVV), 441 to 461 (VLWLVPALVMVGIGEAFHFPA), 480 to 500 (SLTSVVIGISFYLSTAVIDVI), and 520 to 540 (YWVVVIGGVLNLGYFLVCSWF).

The protein belongs to the major facilitator superfamily. Proton-dependent oligopeptide transporter (POT/PTR) (TC 2.A.17) family. As to expression, expressed in the root epidermis or cortex.

It localises to the membrane. Its function is as follows. Transporter involved in a passive nitrate efflux. This chain is Protein NRT1/ PTR FAMILY 2.5 (NPF2.5), found in Arabidopsis thaliana (Mouse-ear cress).